Reading from the N-terminus, the 985-residue chain is Coiled-coil domain-containing protein 33 (985 aa).

The disordered stretch occupies residues 228–263; the sequence is MSPFSTDSDQEGLSWEAGPWQHPAQVPEEPQGRLDT. The 136-residue stretch at 263–398 folds into the C2 domain; the sequence is TSQDPYPAAN…VFLRGVNEPL (136 aa). Positions 599–745 form a coiled coil; that stretch reads VEMNNYRRAM…LEERLCERKE (147 aa). The tract at residues 821 to 842 is disordered; that stretch reads AERLQDTNGPGHPKSTETLPAQ. Residues 885-928 adopt a coiled-coil conformation; the sequence is DKFNLLAKLEQAQSRILSLENQLEESARHWAREKQNLAIRLQEQ. The interval 931 to 985 is disordered; the sequence is GFGQPPNSIIIDQPNAGASKNPQQLSKLEPSLPSSDKKLNRPSDSQIEISNNQKT. 2 stretches are compositionally biased toward polar residues: residues 946-956 and 972-985; these read AGASKNPQQLS and PSDS…NQKT.

This chain is Coiled-coil domain-containing protein 33 (Ccdc33), found in Mus musculus (Mouse).